The following is a 387-amino-acid chain: GTPase Obg (387 aa).

An Obg domain is found at 1 to 159; that stretch reads MKFVDEAIIR…RSLKLELLLL (159 aa). In terms of domain architecture, OBG-type G spans 160–333; the sequence is ADVGLLGMPN…LAVKLLDFIA (174 aa). Residues 166-173, 191-195, 213-216, 283-286, and 314-316 each bind GTP; these read GMPNAGKS, FTTLV, DIPG, NKAD, and SAY. 2 residues coordinate Mg(2+): Ser173 and Thr193.

The protein belongs to the TRAFAC class OBG-HflX-like GTPase superfamily. OBG GTPase family. In terms of assembly, monomer. The cofactor is Mg(2+).

The protein resides in the cytoplasm. An essential GTPase which binds GTP, GDP and possibly (p)ppGpp with moderate affinity, with high nucleotide exchange rates and a fairly low GTP hydrolysis rate. Plays a role in control of the cell cycle, stress response, ribosome biogenesis and in those bacteria that undergo differentiation, in morphogenesis control. The polypeptide is GTPase Obg (Shewanella halifaxensis (strain HAW-EB4)).